The primary structure comprises 322 residues: uncharacterized protein (322 aa).

One can recognise a Radical SAM core domain in the interval 26-267 (HFGHKVFKVA…CDQLEIIPPE (242 aa)). Residues Cys42, Cys54, and Cys57 each contribute to the [4Fe-4S] cluster site.

This sequence belongs to the radical SAM superfamily. The cofactor is [4Fe-4S] cluster.

This is an uncharacterized protein from Bacillus subtilis (strain 168).